The following is a 357-amino-acid chain: MSDQQTCVIDNGSGVVKAGFAGEDAPRAVFPSIVGRPKNVSALIGVDSASEYLGDEAQQKRGVLKIWNHTFYVELRVQPDEHPILLTEAPLSPKTNREKMTQIIFETFNLPALYVAIQAVLSLYSRGRTTGIVCDAGDGLTHTVPIYEGFSIPHAVSTIQLAGRDLTTFLAKLFTERGYNFTSSAELEIVRDIKEKLCFLALNYESALKQSHDSSQFEKNYELPHGKVITIGSERFRCPEYLFKPLEMNGRELDSIQDLTYKSIQECDVDVRRDLYQNIILSGGTTMYEGIGERLLKEIENRAPKSINVKVIASPDRRFAVWRGGSTLTSLSTFASMWITKEDYDENGASIVHRKCI.

The protein belongs to the actin family. Post-translationally, met-1 may be removed after translation.

It localises to the cytoplasm. It is found in the cytoskeleton. The catalysed reaction is ATP + H2O = ADP + phosphate + H(+). Functionally, actins are highly conserved proteins that are involved in various types of cell motility and are ubiquitously expressed in all eukaryotic cells. The chain is Actin, macronuclear from Oxytricha fallax.